A 518-amino-acid polypeptide reads, in one-letter code: Ell-associated factor Eaf (518 aa).

Polar residues-rich tracts occupy residues 119-128 and 163-182; these read KTRSEMTNKP and ENSTMRITSKTKVSTGSRRN. 2 disordered regions span residues 119 to 216 and 241 to 518; these read KTRS…PAWH and ALHN…DDDD. At Ser192 the chain carries Phosphoserine. 2 stretches are compositionally biased toward polar residues: residues 253-265 and 274-284; these read ANISGSSTGSSVG and MGKQRQASSQG. Over residues 289–342 the composition is skewed to low complexity; the sequence is QQQTQRSSPPMQQQQQQQNYGRGGANNNYAQQLHQQQQQQQQQQLQQQQQQMQQ. A compositionally biased stretch (polar residues) spans 343–355; that stretch reads RASFSHSNHSNSM. A compositionally biased stretch (low complexity) spans 368–377; it reads AAQSMAQAAA. The span at 397-412 shows a compositional bias: acidic residues; that stretch reads ESSDSDSGSDSDDSTE. 3 stretches are compositionally biased toward low complexity: residues 418–428, 463–476, and 500–518; these read HQQQQPPGQLS, QQQQQQHQQQQQQQ, and NDLLQNDLQLSSNSSDDDD.

The protein belongs to the EAF family.

The protein resides in the nucleus. Its function is as follows. Promotes transcriptional elongation by Su(Tpl)/ELL. Essential for development. This is Ell-associated factor Eaf from Drosophila mojavensis (Fruit fly).